The primary structure comprises 107 residues: Parvalbumin beta (107 aa).

Serine 1 is modified (N-acetylserine). EF-hand domains are found at residues 37 to 72 (KSLDDVKKAFYVIDQDKSGFIEEDELKLFLQNFSPS) and 76 to 107 (LTDAETKAFLADGDKDGDGMIGVDEFAAMIKA). Residues aspartate 50, aspartate 52, serine 54, phenylalanine 56, glutamate 58, glutamate 61, aspartate 89, aspartate 91, aspartate 93, methionine 95, and glutamate 100 each contribute to the Ca(2+) site.

This sequence belongs to the parvalbumin family.

In muscle, parvalbumin is thought to be involved in relaxation after contraction. It binds two calcium ions. The polypeptide is Parvalbumin beta (Esox lucius (Northern pike)).